We begin with the raw amino-acid sequence, 569 residues long: Proton-coupled zinc antiporter SLC30A9, mitochondrial (569 aa).

The N-terminal 68 residues, 1–68 (MLPGLAAAAA…IGTLSQVKLY (68 aa)), are a transit peptide targeting the mitochondrion. A run of 5 helical transmembrane segments spans residues 240–260 (VVMV…LAWI), 315–335 (GVGI…MGLL), 343–363 (LLWA…TLLV), 393–413 (VILL…TCMG), and 425–445 (SLGS…LIYT). The short motif at 463–467 (LTELL) is the LXXLL motif element.

The protein belongs to the cation diffusion facilitator (CDF) transporter (TC 2.A.4) family. SLC30A subfamily. Interacts with GRIP1, ESR1, AR and CTNNB1.

The protein localises to the mitochondrion membrane. It localises to the nucleus. It is found in the endoplasmic reticulum. It carries out the reaction Zn(2+)(in) + 2 H(+)(out) = Zn(2+)(out) + 2 H(+)(in). In terms of biological role, mitochondrial proton-coupled zinc ion antiporter mediating the export of zinc from the mitochondria and involved in zinc homeostasis, zinc mobilization as well as mitochondrial morphology and health. In nucleus, functions as a secondary coactivator for nuclear receptors by cooperating with p160 coactivators subtypes. Plays a role in transcriptional activation of Wnt-responsive genes. The chain is Proton-coupled zinc antiporter SLC30A9, mitochondrial (SLC30A9) from Pongo abelii (Sumatran orangutan).